A 1114-amino-acid chain; its full sequence is TBC1 domain family member 8B (1114 aa).

GRAM domains are found at residues leucine 145–serine 212 and glutamate 285–aspartate 353. Residues threonine 399–serine 411 show a composition bias toward polar residues. A disordered region spans residues threonine 399–threonine 420. The region spanning glycine 486–glycine 673 is the Rab-GAP TBC domain. Residues asparagine 857–glycine 892 form the EF-hand domain. Disordered stretches follow at residues serine 938–lysine 957 and leucine 1032–proline 1061. Over residues proline 940–lysine 957 the composition is skewed to basic and acidic residues.

As to quaternary structure, interacts (via domain Rab-GAP TBC) with RAB11B (in GTP-bound form).

The protein resides in the cytoplasm. The protein localises to the cytosol. In terms of biological role, involved in vesicular recycling, probably as a RAB11B GTPase-activating protein. This Mus musculus (Mouse) protein is TBC1 domain family member 8B (Tbc1d8b).